A 175-amino-acid chain; its full sequence is FMN reductase (NADH) RutF (175 aa).

Belongs to the non-flavoprotein flavin reductase family. RutF subfamily.

The enzyme catalyses FMNH2 + NAD(+) = FMN + NADH + 2 H(+). Its function is as follows. Catalyzes the reduction of FMN to FMNH2 which is used to reduce pyrimidine by RutA via the Rut pathway. The protein is FMN reductase (NADH) RutF of Serratia proteamaculans (strain 568).